A 537-amino-acid polypeptide reads, in one-letter code: Cytoplasmic 60S subunit biogenesis factor REI1 homolog (537 aa).

2 C2H2-type zinc fingers span residues 18–42 (YTCNTCQVAFRNSELQRGHMRSDWH) and 83–107 (KTCEVCQKTYYSENSFRNHLSSTKH). Disordered regions lie at residues 101–151 (HLSS…AEEE) and 163–204 (SIHD…PEAL). Residues 192 to 204 (EETPTTTPKPEAL) are compositionally biased toward low complexity. A C2H2-type 3 zinc finger spans residues 260–284 (NECLTCGKMKVNVFAIQTHMRDKSH). Over residues 312 to 322 (DWETEEEDKGE) the composition is skewed to acidic residues. 2 disordered regions span residues 312 to 361 (DWET…ASSL) and 382 to 401 (GKHPHHSRENKKAHREADGI). The segment covering 323–339 (EDGGVRLGAKRESKVVD) has biased composition (basic and acidic residues). Residues 340-356 (ENGDEVMEDEEGWETDS) are compositionally biased toward acidic residues. Residues 383-395 (KHPHHSRENKKAH) show a composition bias toward basic residues.

Belongs to the REI1 family. As to quaternary structure, associates with nascent pre-60S particles that have not yet entered the translating pool, and is released from mature 60S subunits.

Its subcellular location is the cytoplasm. Its function is as follows. Pre-60S-associated factor involved in the cytoplasmic maturation of the 60S subunit. Involved in the dissociation and recycling of other late pre-60S factors before newly synthesized large ribosomal subunits enter translation. In Chaetomium thermophilum (strain DSM 1495 / CBS 144.50 / IMI 039719) (Thermochaetoides thermophila), this protein is Cytoplasmic 60S subunit biogenesis factor REI1 homolog.